Consider the following 867-residue polypeptide: uncharacterized protein (867 aa).

Positions 76–108 form a DNA-binding region, zn(2)-C6 fungal-type; the sequence is CDFCRQKKIRCDMDQSPRPGNACINCRKHHLDC. Disordered regions lie at residues 110-167 and 217-257; these read FTRT…ITPV and PQLA…NSNL. Polar residues-rich tracts occupy residues 137 to 167 and 248 to 257; these read SAKS…ITPV and SISSYTNSNL.

The protein localises to the nucleus. This is an uncharacterized protein from Schizosaccharomyces pombe (strain 972 / ATCC 24843) (Fission yeast).